Here is a 460-residue protein sequence, read N- to C-terminus: MRSLWVEKRKDDPVKTQMYYAKQGIITQEMEYVAKIEKLSPELIRSEIARGRLIIPANVNHTTLEPMAIGIAATCKINANIGSSAIASDVQGEVEKMQVSQHYKADTAMDLSTGGDLDEIRKAVIASSKIPIGTVPIYQILHDVGNKIEDLSIEVMLEVLERQAKQGVSYFTIHAGFLLETMPKIAKRKMGIVSRGGSLMAAWMMHYHRENPFYTAYDEILDICARYDVALSLGDSLRPGCLADASDDAQLGELKVLGELTLRAWEKNVQVMIEGPGHVPLNQIERNMKLQRELCHEAPFYILGPLVTDIAAGYDHISSAIGAAVGGWHGASMLCYVTPKEHLGLPNANDVREGIIAYKIAAHAADIARGRKGARDIDDEMSDARYRFDWNRQFELALDSERAREYHDETLPQDVFKEAEFCSMCGPKFCSYKITQSIMDNPEAIEQIAREVKEREALGA.

Substrate contacts are provided by residues asparagine 80, methionine 109, tyrosine 138, histidine 174, 194 to 196, 235 to 238, and glutamate 274; these read SRG and DSLR. Residue histidine 278 participates in Zn(2+) binding. Tyrosine 301 contacts substrate. Histidine 342 contributes to the Zn(2+) binding site. Cysteine 422, cysteine 425, and cysteine 430 together coordinate [4Fe-4S] cluster.

This sequence belongs to the ThiC family. Homodimer. [4Fe-4S] cluster serves as cofactor.

It carries out the reaction 5-amino-1-(5-phospho-beta-D-ribosyl)imidazole + S-adenosyl-L-methionine = 4-amino-2-methyl-5-(phosphooxymethyl)pyrimidine + CO + 5'-deoxyadenosine + formate + L-methionine + 3 H(+). Its pathway is cofactor biosynthesis; thiamine diphosphate biosynthesis. Its function is as follows. Catalyzes the synthesis of the hydroxymethylpyrimidine phosphate (HMP-P) moiety of thiamine from aminoimidazole ribotide (AIR) in a radical S-adenosyl-L-methionine (SAM)-dependent reaction. In Sulfurimonas denitrificans (strain ATCC 33889 / DSM 1251) (Thiomicrospira denitrificans (strain ATCC 33889 / DSM 1251)), this protein is Phosphomethylpyrimidine synthase.